We begin with the raw amino-acid sequence, 429 residues long: L-cysteine:1D-myo-inositol 2-amino-2-deoxy-alpha-D-glucopyranoside ligase (429 aa).

Cysteine 60 provides a ligand contact to Zn(2+). Residues 60-63 (CGIT), threonine 75, and 98-100 (NIT) contribute to the L-cysteinyl-5'-AMP site. The short motif at 62–72 (ITPYDATHLGH) is the 'HIGH' region element. A 'ERGGDP' region motif is present at residues 204–209 (ERGGDP). An L-cysteinyl-5'-AMP-binding site is contributed by tryptophan 244. Residue cysteine 248 coordinates Zn(2+). 266-268 (GSD) serves as a coordination point for L-cysteinyl-5'-AMP. Histidine 273 contacts Zn(2+). Isoleucine 300 serves as a coordination point for L-cysteinyl-5'-AMP. A 'KMSKS' region motif is present at residues 306–310 (KMSKS).

The protein belongs to the class-I aminoacyl-tRNA synthetase family. MshC subfamily. As to quaternary structure, monomer. The cofactor is Zn(2+).

The enzyme catalyses 1D-myo-inositol 2-amino-2-deoxy-alpha-D-glucopyranoside + L-cysteine + ATP = 1D-myo-inositol 2-(L-cysteinylamino)-2-deoxy-alpha-D-glucopyranoside + AMP + diphosphate + H(+). Catalyzes the ATP-dependent condensation of GlcN-Ins and L-cysteine to form L-Cys-GlcN-Ins. This Mycolicibacterium vanbaalenii (strain DSM 7251 / JCM 13017 / BCRC 16820 / KCTC 9966 / NRRL B-24157 / PYR-1) (Mycobacterium vanbaalenii) protein is L-cysteine:1D-myo-inositol 2-amino-2-deoxy-alpha-D-glucopyranoside ligase.